The chain runs to 341 residues: L-threonine 3-dehydrogenase (341 aa).

Residue cysteine 38 participates in Zn(2+) binding. Residues threonine 40 and histidine 43 each act as charge relay system in the active site. Zn(2+)-binding residues include histidine 63, glutamate 64, cysteine 93, cysteine 96, cysteine 99, and cysteine 107. Residues isoleucine 175, aspartate 195, arginine 200, 262–264 (LGI), and 286–287 (IY) contribute to the NAD(+) site.

It belongs to the zinc-containing alcohol dehydrogenase family. Homotetramer. Requires Zn(2+) as cofactor.

The protein localises to the cytoplasm. It carries out the reaction L-threonine + NAD(+) = (2S)-2-amino-3-oxobutanoate + NADH + H(+). The protein operates within amino-acid degradation; L-threonine degradation via oxydo-reductase pathway; glycine from L-threonine: step 1/2. Functionally, catalyzes the NAD(+)-dependent oxidation of L-threonine to 2-amino-3-ketobutyrate. This Klebsiella pneumoniae (strain 342) protein is L-threonine 3-dehydrogenase.